Here is a 314-residue protein sequence, read N- to C-terminus: Deoxymugineic acid synthase 1 (314 aa).

Residue Asp-44 participates in NADP(+) binding. Tyr-49 acts as the Proton donor in catalysis. Residue His-112 participates in substrate binding. NADP(+)-binding positions include 158 to 159 (CN), Gln-180, 258 to 266 (FDEGRMKEN), and 273 to 281 (ELSEEERQR).

The protein belongs to the aldo/keto reductase family.

The catalysed reaction is 2'-deoxymugineate + NAD(+) = 3''-deamino-3''-oxonicotianamine + NADH + H(+). It carries out the reaction 2'-deoxymugineate + NADP(+) = 3''-deamino-3''-oxonicotianamine + NADPH + H(+). The protein operates within siderophore biosynthesis. Functionally, catalyzes the reduction of a 3''-keto intermediate during the biosynthesis of 2'-deoxymugineic acid (DMA) from L-Met. Involved in the formation of phytosiderophores (MAs) belonging to the mugineic acid family and required to acquire iron. The polypeptide is Deoxymugineic acid synthase 1 (Zea mays (Maize)).